A 179-amino-acid polypeptide reads, in one-letter code: Exosome complex component Csl4 (179 aa).

Residues 58–137 enclose the S1 motif domain; the sequence is GDVVLGRVVD…RLSTKEEEMG (80 aa). Residues cysteine 143, cysteine 146, cysteine 159, and cysteine 162 each coordinate Zn(2+).

This sequence belongs to the CSL4 family. Component of the archaeal exosome complex. Forms a trimer of Rrp4 and/or Csl4 subunits. The trimer associates with a hexameric ring-like arrangement composed of 3 Rrp41-Rrp42 heterodimers. Interacts with DnaG.

It localises to the cytoplasm. Functionally, non-catalytic component of the exosome, which is a complex involved in RNA degradation. Increases the RNA binding and the efficiency of RNA degradation. Helpful for the interaction of the exosome with A-poor RNAs. The chain is Exosome complex component Csl4 from Archaeoglobus fulgidus (strain ATCC 49558 / DSM 4304 / JCM 9628 / NBRC 100126 / VC-16).